The sequence spans 192 residues: LOB domain-containing protein 32 (192 aa).

Residues 4–105 (NRCAVCKILN…QDIESAVNEL (102 aa)) enclose the LOB domain.

It belongs to the LOB domain-containing protein family.

This chain is LOB domain-containing protein 32 (LBD32), found in Arabidopsis thaliana (Mouse-ear cress).